Reading from the N-terminus, the 585-residue chain is Putative ABC transporter ATP-binding protein MG187 (585 aa).

Positions 8–468 (IELKNIVVDF…PANEFVARFL (461 aa)) constitute an ABC transporter domain. An ATP-binding site is contributed by 40–47 (GPSGCGKT).

Belongs to the ABC transporter superfamily.

This chain is Putative ABC transporter ATP-binding protein MG187, found in Mycoplasma genitalium (strain ATCC 33530 / DSM 19775 / NCTC 10195 / G37) (Mycoplasmoides genitalium).